The following is a 475-amino-acid chain: Ribulose bisphosphate carboxylase large chain (475 aa).

A propeptide spanning residues M1–S2 is cleaved from the precursor. Position 3 is an N-acetylproline (P3). Residues N123 and T173 each contribute to the substrate site. The active-site Proton acceptor is K175. K177 is a binding site for substrate. Mg(2+) is bound by residues K201, D203, and E204. N6-carboxylysine is present on K201. H294 (proton acceptor) is an active-site residue. Residues R295, H327, and S379 each contribute to the substrate site.

This sequence belongs to the RuBisCO large chain family. Type I subfamily. In terms of assembly, heterohexadecamer of 8 large chains and 8 small chains; disulfide-linked. The disulfide link is formed within the large subunit homodimers. It depends on Mg(2+) as a cofactor. In terms of processing, the disulfide bond which can form in the large chain dimeric partners within the hexadecamer appears to be associated with oxidative stress and protein turnover.

The protein localises to the plastid. It is found in the chloroplast. The enzyme catalyses 2 (2R)-3-phosphoglycerate + 2 H(+) = D-ribulose 1,5-bisphosphate + CO2 + H2O. It carries out the reaction D-ribulose 1,5-bisphosphate + O2 = 2-phosphoglycolate + (2R)-3-phosphoglycerate + 2 H(+). RuBisCO catalyzes two reactions: the carboxylation of D-ribulose 1,5-bisphosphate, the primary event in carbon dioxide fixation, as well as the oxidative fragmentation of the pentose substrate in the photorespiration process. Both reactions occur simultaneously and in competition at the same active site. In Welwitschia mirabilis (Tree tumbo), this protein is Ribulose bisphosphate carboxylase large chain.